The chain runs to 541 residues: Chaperonin GroEL 2 (541 aa).

ATP-binding positions include 29 to 32 (TLGP), 86 to 90 (DGTTT), Gly-413, 476 to 478 (NAA), and Asp-492.

The protein belongs to the chaperonin (HSP60) family. Forms a cylinder of 14 subunits composed of two heptameric rings stacked back-to-back. Interacts with the co-chaperonin GroES.

It localises to the secreted. Its subcellular location is the capsule. The protein localises to the cell surface. The protein resides in the cell wall. The catalysed reaction is ATP + H2O + a folded polypeptide = ADP + phosphate + an unfolded polypeptide.. Functionally, together with its co-chaperonin GroES, plays an essential role in assisting protein folding. The GroEL-GroES system forms a nano-cage that allows encapsulation of the non-native substrate proteins and provides a physical environment optimized to promote and accelerate protein folding. The chain is Chaperonin GroEL 2 from Mycobacterium sp. (strain KMS).